Consider the following 369-residue polypeptide: Peptide chain release factor 2 (369 aa).

Glutamine 251 carries the N5-methylglutamine modification.

The protein belongs to the prokaryotic/mitochondrial release factor family. Post-translationally, methylated by PrmC. Methylation increases the termination efficiency of RF2.

It localises to the cytoplasm. In terms of biological role, peptide chain release factor 2 directs the termination of translation in response to the peptide chain termination codons UGA and UAA. The polypeptide is Peptide chain release factor 2 (prfB) (Chlamydia muridarum (strain MoPn / Nigg)).